A 194-amino-acid chain; its full sequence is Holliday junction branch migration complex subunit RuvA (194 aa).

The segment at 1-61 (MIASLSGLLE…EDSVSLYGFA (61 aa)) is domain I. Residues 62-136 (SVLECTVFEQ…GKLTSVPLEN (75 aa)) form a domain II region. The interval 136–140 (NRKQE) is flexible linker. The segment at 141 to 194 (QAVDRSAEIVQALIGLGWQRQESAAAVESVLEKDQSLTMPEILRNALRYLAKQE) is domain III.

This sequence belongs to the RuvA family. Homotetramer. Forms an RuvA(8)-RuvB(12)-Holliday junction (HJ) complex. HJ DNA is sandwiched between 2 RuvA tetramers; dsDNA enters through RuvA and exits via RuvB. An RuvB hexamer assembles on each DNA strand where it exits the tetramer. Each RuvB hexamer is contacted by two RuvA subunits (via domain III) on 2 adjacent RuvB subunits; this complex drives branch migration. In the full resolvosome a probable DNA-RuvA(4)-RuvB(12)-RuvC(2) complex forms which resolves the HJ.

The protein localises to the cytoplasm. Its function is as follows. The RuvA-RuvB-RuvC complex processes Holliday junction (HJ) DNA during genetic recombination and DNA repair, while the RuvA-RuvB complex plays an important role in the rescue of blocked DNA replication forks via replication fork reversal (RFR). RuvA specifically binds to HJ cruciform DNA, conferring on it an open structure. The RuvB hexamer acts as an ATP-dependent pump, pulling dsDNA into and through the RuvAB complex. HJ branch migration allows RuvC to scan DNA until it finds its consensus sequence, where it cleaves and resolves the cruciform DNA. The sequence is that of Holliday junction branch migration complex subunit RuvA from Tropheryma whipplei (strain Twist) (Whipple's bacillus).